Consider the following 137-residue polypeptide: S-adenosylmethionine decarboxylase proenzyme (137 aa).

The active-site Schiff-base intermediate with substrate; via pyruvic acid is serine 63. Serine 63 is modified (pyruvic acid (Ser); by autocatalysis). Histidine 68 functions as the Proton acceptor; for processing activity in the catalytic mechanism. Cysteine 83 functions as the Proton donor; for catalytic activity in the catalytic mechanism.

Belongs to the prokaryotic AdoMetDC family. Type 1 subfamily. In terms of assembly, heterotetramer of two alpha and two beta chains arranged as a dimer of alpha/beta heterodimers. Pyruvate serves as cofactor. Is synthesized initially as an inactive proenzyme. Formation of the active enzyme involves a self-maturation process in which the active site pyruvoyl group is generated from an internal serine residue via an autocatalytic post-translational modification. Two non-identical subunits are generated from the proenzyme in this reaction, and the pyruvate is formed at the N-terminus of the alpha chain, which is derived from the carboxyl end of the proenzyme. The post-translation cleavage follows an unusual pathway, termed non-hydrolytic serinolysis, in which the side chain hydroxyl group of the serine supplies its oxygen atom to form the C-terminus of the beta chain, while the remainder of the serine residue undergoes an oxidative deamination to produce ammonia and the pyruvoyl group blocking the N-terminus of the alpha chain.

It catalyses the reaction S-adenosyl-L-methionine + H(+) = S-adenosyl 3-(methylsulfanyl)propylamine + CO2. It functions in the pathway amine and polyamine biosynthesis; S-adenosylmethioninamine biosynthesis; S-adenosylmethioninamine from S-adenosyl-L-methionine: step 1/1. Functionally, catalyzes the decarboxylation of S-adenosylmethionine to S-adenosylmethioninamine (dcAdoMet), the propylamine donor required for the synthesis of the polyamines spermine and spermidine from the diamine putrescine. The protein is S-adenosylmethionine decarboxylase proenzyme of Fervidobacterium nodosum (strain ATCC 35602 / DSM 5306 / Rt17-B1).